Reading from the N-terminus, the 134-residue chain is Fluoride-specific ion channel FluC 2 (134 aa).

4 consecutive transmembrane segments (helical) span residues leucine 10–leucine 30, leucine 43–proline 63, leucine 67–alanine 87, and phenylalanine 100–leucine 120. Glycine 75 and threonine 78 together coordinate Na(+).

Belongs to the fluoride channel Fluc/FEX (TC 1.A.43) family.

Its subcellular location is the cell inner membrane. It carries out the reaction fluoride(in) = fluoride(out). With respect to regulation, na(+) is not transported, but it plays an essential structural role and its presence is essential for fluoride channel function. Fluoride-specific ion channel. Important for reducing fluoride concentration in the cell, thus reducing its toxicity. This chain is Fluoride-specific ion channel FluC 2, found in Synechococcus sp. (strain CC9902).